We begin with the raw amino-acid sequence, 657 residues long: MYPPPPAPAPHRDFISVTLSLGESYDNSKSRRRRSCWRKWKQLSRLQRNVILFVLGFLILCGFLYSLQVSDQWKALSGSRAEVEKMKLEVLPVLPAPQKESAEPEGFADILSQKRQRHLRRGPPHLQIRPPNTVSKDGMQDDAKEREAALGKAQQEENTQRTVISWRGAVIEPEQATEPPSKRAEASIKPLFLASRIWKEPAPPNERQKGVIEAFLHAWKGYQKFAWGHDELKPVSKTFSEWFGLGLTLIDALDTMWILGLKQEFKEARKWVSENLDFQKNVDVNLFESTIRILGGLLSAYHLSGDSLFLSKAEDFGNRLMPAFTTPSKIPYSDVNIGTGFAHSPQWTSDSTVAEVTSIQLEFRELSRLTGIKKFQEAVEEVTKHIHSLSGKKDGLVPMFINTNSGLFTHPGVFTLGARADSYYEYLLKQWIQGGKKETQLLEDYVRAIEGIKAHLLRQSQPRKLTFVGELAHGRFSAKMDHLVCFLPGTLALGVHHGLPADHMDLARALMETCYQMNQQMETGLSPEIAHFNMYPRADHKDVEVKPADRHNLLRPETVESLFYLYRVTKDRKYQDWGWEILQSFNKYTRVPSGGYSSINNVQNSHKPEPRDKMESFFVGETLKYLYLLFSDDLELLGLDTCVFNTEAHPLPIWSPA.

Residues 1 to 49 are Cytoplasmic-facing; it reads MYPPPPAPAPHRDFISVTLSLGESYDNSKSRRRRSCWRKWKQLSRLQRN. A helical transmembrane segment spans residues 50-70; sequence VILFVLGFLILCGFLYSLQVS. Residues 71–657 are Lumenal-facing; that stretch reads DQWKALSGSR…AHPLPIWSPA (587 aa). At Ser101 the chain carries Phosphoserine. Residues 118–157 form a disordered region; that stretch reads HLRRGPPHLQIRPPNTVSKDGMQDDAKEREAALGKAQQEE. The span at 138–157 shows a compositional bias: basic and acidic residues; the sequence is GMQDDAKEREAALGKAQQEE. Glu288 functions as the Proton donor in the catalytic mechanism. Asp421 is a catalytic residue. Cys485 and Cys514 are disulfide-bonded. Glu528 functions as the Proton donor in the catalytic mechanism. Glu557 is a catalytic residue. A Ca(2+)-binding site is contributed by Thr646.

It belongs to the glycosyl hydrolase 47 family. Ca(2+) serves as cofactor.

Its subcellular location is the endoplasmic reticulum membrane. It carries out the reaction N(4)-(alpha-D-Man-(1-&gt;2)-alpha-D-Man-(1-&gt;2)-alpha-D-Man-(1-&gt;3)-[alpha-D-Man-(1-&gt;2)-alpha-D-Man-(1-&gt;3)-[alpha-D-Man-(1-&gt;2)-alpha-D-Man-(1-&gt;6)]-alpha-D-Man-(1-&gt;6)]-beta-D-Man-(1-&gt;4)-beta-D-GlcNAc-(1-&gt;4)-beta-D-GlcNAc)-L-asparaginyl-[protein] (N-glucan mannose isomer 9A1,2,3B1,2,3) + 4 H2O = N(4)-(alpha-D-Man-(1-&gt;3)-[alpha-D-Man-(1-&gt;3)-[alpha-D-Man-(1-&gt;6)]-alpha-D-Man-(1-&gt;6)]-beta-D-Man-(1-&gt;4)-beta-D-GlcNAc-(1-&gt;4)-beta-D-GlcNAc)-L-asparaginyl-[protein] (N-glucan mannose isomer 5A1,2) + 4 beta-D-mannose. The enzyme catalyses N(4)-(alpha-D-Man-(1-&gt;2)-alpha-D-Man-(1-&gt;2)-alpha-D-Man-(1-&gt;3)-[alpha-D-Man-(1-&gt;3)-[alpha-D-Man-(1-&gt;2)-alpha-D-Man-(1-&gt;6)]-alpha-D-Man-(1-&gt;6)]-beta-D-Man-(1-&gt;4)-beta-D-GlcNAc-(1-&gt;4)-beta-D-GlcNAc)-L-asparaginyl-[protein] (N-glucan mannose isomer 8A1,2,3B1,3) + 3 H2O = N(4)-(alpha-D-Man-(1-&gt;3)-[alpha-D-Man-(1-&gt;3)-[alpha-D-Man-(1-&gt;6)]-alpha-D-Man-(1-&gt;6)]-beta-D-Man-(1-&gt;4)-beta-D-GlcNAc-(1-&gt;4)-beta-D-GlcNAc)-L-asparaginyl-[protein] (N-glucan mannose isomer 5A1,2) + 3 beta-D-mannose. The protein operates within protein modification; protein glycosylation. Functionally, involved in glycoprotein quality control targeting of misfolded glycoproteins for degradation. It primarily trims a single alpha-1,2-linked mannose residue from Man(9)GlcNAc(2) to produce Man(8)GlcNAc(2), but at high enzyme concentrations, as found in the ER quality control compartment (ERQC), it further trims the carbohydrates to Man(5-6)GlcNAc(2). This Rattus norvegicus (Rat) protein is Endoplasmic reticulum mannosyl-oligosaccharide 1,2-alpha-mannosidase (Man1b1).